The chain runs to 146 residues: Negative cofactor 2 complex subunit beta (146 aa).

The tract at residues 124–146 (FRQSRSRLHHNSVSDPVKSEDSS) is disordered. 3 positions are modified to phosphoserine: serine 135, serine 137, and serine 142.

As to quaternary structure, component of the NC2 (negative cofactor 2) complex composed of BUR6 and NCB2. The NC2 complex associates with SPT15/TBP. Interacts with SPT15/TBP.

It is found in the nucleus. Its function is as follows. Component of the NC2 complex which represses RNA polymerase II transcription through binding to SPT15/TBP and thereby inhibiting the assembly of the preinitiation complex. The NC2 complex may also mediate transcriptional activation from TATA-driven promoters through association with SPT15/TBP. The sequence is that of Negative cofactor 2 complex subunit beta (NCB2) from Saccharomyces cerevisiae (strain ATCC 204508 / S288c) (Baker's yeast).